A 133-amino-acid polypeptide reads, in one-letter code: Profilin-3 (133 aa).

Cys-13 and Cys-117 are oxidised to a cystine. Positions 83–99 (AVIRGKKGSGGITIKKT) match the Involved in PIP2 interaction motif. Thr-113 bears the Phosphothreonine mark.

It belongs to the profilin family. As to quaternary structure, occurs in many kinds of cells as a complex with monomeric actin in a 1:1 ratio. Phosphorylated by MAP kinases.

The protein localises to the cytoplasm. Its subcellular location is the cytoskeleton. Binds to actin and affects the structure of the cytoskeleton. At high concentrations, profilin prevents the polymerization of actin, whereas it enhances it at low concentrations. The polypeptide is Profilin-3 (Corylus avellana (European hazel)).